The sequence spans 819 residues: Ribosome-releasing factor 2, mitochondrial (819 aa).

The transit peptide at 1-30 (MWKWNVRRWAGARVNISKNRLSVINVGSRY) directs the protein to the mitochondrion. In terms of domain architecture, tr-type G spans 39–327 (SKVRNIGIIA…AIVNYLPSPI (289 aa)). GTP is bound by residues 48-55 (AHIDAGKT), 113-117 (DTPGH), and 165-168 (NKMD).

This sequence belongs to the TRAFAC class translation factor GTPase superfamily. Classic translation factor GTPase family. EF-G/EF-2 subfamily.

The protein localises to the mitochondrion. Its function is as follows. Mitochondrial GTPase that mediates the disassembly of ribosomes from messenger RNA at the termination of mitochondrial protein biosynthesis. Not involved in the GTP-dependent ribosomal translocation step during translation elongation. The polypeptide is Ribosome-releasing factor 2, mitochondrial (Saccharomyces cerevisiae (strain RM11-1a) (Baker's yeast)).